Reading from the N-terminus, the 166-residue chain is Phosphopantetheine adenylyltransferase (166 aa).

Residue T10 participates in substrate binding. Residues 10–11 (TF) and H18 contribute to the ATP site. K42, L74, and R88 together coordinate substrate. Residues 89–91 (GLR), E99, and 124–130 (NSFISSS) contribute to the ATP site.

Belongs to the bacterial CoaD family. Homohexamer. Mg(2+) is required as a cofactor.

It localises to the cytoplasm. The enzyme catalyses (R)-4'-phosphopantetheine + ATP + H(+) = 3'-dephospho-CoA + diphosphate. The protein operates within cofactor biosynthesis; coenzyme A biosynthesis; CoA from (R)-pantothenate: step 4/5. In terms of biological role, reversibly transfers an adenylyl group from ATP to 4'-phosphopantetheine, yielding dephospho-CoA (dPCoA) and pyrophosphate. The sequence is that of Phosphopantetheine adenylyltransferase from Idiomarina loihiensis (strain ATCC BAA-735 / DSM 15497 / L2-TR).